The chain runs to 709 residues: UvrABC system protein B (709 aa).

Positions 35-416 constitute a Helicase ATP-binding domain; the sequence is ERVEAGEKDV…YELGQADGYV (382 aa). Residue 48 to 55 participates in ATP binding; it reads GATGTGKS. The short motif at 101 to 124 is the Beta-hairpin element; the sequence is YYDYYQPEAYVPQTDTFIEKDSSI. In terms of domain architecture, Helicase C-terminal spans 438-604; that stretch reads QIDDLLEQIR…PLRKRIADIT (167 aa). The region spanning 666–701 is the UVR domain; it reads ADLIEQMSQQMHQAAADLQFELAARLRDEVGELKKE.

It belongs to the UvrB family. Forms a heterotetramer with UvrA during the search for lesions. Interacts with UvrC in an incision complex.

The protein localises to the cytoplasm. The UvrABC repair system catalyzes the recognition and processing of DNA lesions. A damage recognition complex composed of 2 UvrA and 2 UvrB subunits scans DNA for abnormalities. Upon binding of the UvrA(2)B(2) complex to a putative damaged site, the DNA wraps around one UvrB monomer. DNA wrap is dependent on ATP binding by UvrB and probably causes local melting of the DNA helix, facilitating insertion of UvrB beta-hairpin between the DNA strands. Then UvrB probes one DNA strand for the presence of a lesion. If a lesion is found the UvrA subunits dissociate and the UvrB-DNA preincision complex is formed. This complex is subsequently bound by UvrC and the second UvrB is released. If no lesion is found, the DNA wraps around the other UvrB subunit that will check the other stand for damage. The protein is UvrABC system protein B of Micrococcus luteus (strain ATCC 4698 / DSM 20030 / JCM 1464 / CCM 169 / CCUG 5858 / IAM 1056 / NBRC 3333 / NCIMB 9278 / NCTC 2665 / VKM Ac-2230) (Micrococcus lysodeikticus).